A 202-amino-acid polypeptide reads, in one-letter code: Imidazoleglycerol-phosphate dehydratase (202 aa).

Belongs to the imidazoleglycerol-phosphate dehydratase family.

Its subcellular location is the cytoplasm. The catalysed reaction is D-erythro-1-(imidazol-4-yl)glycerol 3-phosphate = 3-(imidazol-4-yl)-2-oxopropyl phosphate + H2O. It participates in amino-acid biosynthesis; L-histidine biosynthesis; L-histidine from 5-phospho-alpha-D-ribose 1-diphosphate: step 6/9. The chain is Imidazoleglycerol-phosphate dehydratase from Rhizobium meliloti (strain 1021) (Ensifer meliloti).